Consider the following 1075-residue polypeptide: DNA-directed RNA polymerase subunit beta (1075 aa).

This sequence belongs to the RNA polymerase beta chain family. In plastids the minimal PEP RNA polymerase catalytic core is composed of four subunits: alpha, beta, beta', and beta''. When a (nuclear-encoded) sigma factor is associated with the core the holoenzyme is formed, which can initiate transcription.

It localises to the plastid. The protein resides in the chloroplast. It catalyses the reaction RNA(n) + a ribonucleoside 5'-triphosphate = RNA(n+1) + diphosphate. DNA-dependent RNA polymerase catalyzes the transcription of DNA into RNA using the four ribonucleoside triphosphates as substrates. The protein is DNA-directed RNA polymerase subunit beta of Saccharum officinarum (Sugarcane).